We begin with the raw amino-acid sequence, 263 residues long: Ribosomal RNA small subunit methyltransferase J (263 aa).

S-adenosyl-L-methionine contacts are provided by residues 115–116 (RD), 131–132 (ER), and Asp181.

The protein belongs to the methyltransferase superfamily. RsmJ family.

The protein resides in the cytoplasm. It carries out the reaction guanosine(1516) in 16S rRNA + S-adenosyl-L-methionine = N(2)-methylguanosine(1516) in 16S rRNA + S-adenosyl-L-homocysteine + H(+). In terms of biological role, specifically methylates the guanosine in position 1516 of 16S rRNA. The protein is Ribosomal RNA small subunit methyltransferase J of Hahella chejuensis (strain KCTC 2396).